An 83-amino-acid chain; its full sequence is Mu-theraphotoxin-Hhn2j 4 (83 aa).

Positions 1–21 (MKASMFLALAGLVLLFVVGYA) are cleaved as a signal peptide. Positions 22–48 (SESEEKEFPIELLSKIFAVDVFKGEGR) are excised as a propeptide. 3 cysteine pairs are disulfide-bonded: Cys50/Cys65, Cys57/Cys70, and Cys64/Cys77. Leu81 carries the leucine amide modification.

The protein belongs to the neurotoxin 10 (Hwtx-1) family. 15 (Hntx-3) subfamily. Monomer. As to expression, expressed by the venom gland.

It localises to the secreted. In terms of biological role, lethal neurotoxin. Selectively blocks tetrodotoxin-sensitive voltage-gated sodium channels (Nav). Does not affect tetrodotoxin-resistant voltage-gated sodium channels or calcium channels. The protein is Mu-theraphotoxin-Hhn2j 4 of Cyriopagopus hainanus (Chinese bird spider).